The following is a 74-amino-acid chain: Mitochondrial import receptor subunit TOM6 homolog (74 aa).

Residues 1-20 (MASSGVTVSAAGSASEASEV) are compositionally biased toward low complexity. The disordered stretch occupies residues 1-21 (MASSGVTVSAAGSASEASEVP). Alanine 2 carries the N-acetylalanine modification.

It belongs to the Tom6 family. In terms of assembly, forms part of the preprotein translocase complex of the outer mitochondrial membrane (TOM complex) which consists of at least 7 different proteins (TOMM5, TOMM6, TOMM7, TOMM20, TOMM22, TOMM40 and TOMM70).

The protein localises to the mitochondrion outer membrane. The polypeptide is Mitochondrial import receptor subunit TOM6 homolog (Tomm6) (Mus musculus (Mouse)).